The sequence spans 511 residues: Trigger factor (511 aa).

The region spanning 168–253 is the PPIase FKBP-type domain; sequence GDLLTIDFVG…VKEVKAPAEV (86 aa). A disordered region spans residues 446–511; the sequence is DEHEHHHHDH…KAPAKKKKED (66 aa). A compositionally biased stretch (basic and acidic residues) spans 455-478; it reads HDHDHDHDHDHDHGHDHDHGDEKP. The span at 479-488 shows a compositional bias: basic residues; that stretch reads KKKPAAKKAA. Over residues 489-498 the composition is skewed to basic and acidic residues; it reads AKSDDGEAKP. The segment covering 499-511 has biased composition (basic residues); sequence AAKKAPAKKKKED.

The protein belongs to the FKBP-type PPIase family. Tig subfamily.

The protein resides in the cytoplasm. The catalysed reaction is [protein]-peptidylproline (omega=180) = [protein]-peptidylproline (omega=0). Its function is as follows. Involved in protein export. Acts as a chaperone by maintaining the newly synthesized protein in an open conformation. Functions as a peptidyl-prolyl cis-trans isomerase. The polypeptide is Trigger factor (Parvibaculum lavamentivorans (strain DS-1 / DSM 13023 / NCIMB 13966)).